The following is an 851-amino-acid chain: Glycogen phosphorylase, liver form (851 aa).

A2 bears the N-acetylalanine mark. S15 bears the Phosphoserine; by PHK; in form phosphorylase a mark. AMP-binding positions include 43–45 (DRN), Y76, and R310. K364 carries the N6-succinyllysine modification. K470 carries the N6-acetyllysine modification. Phosphoserine occurs at positions 524, 561, and 639. At K681 the chain carries N6-(pyridoxal phosphate)lysine. Position 796 is an N6-acetyllysine (K796).

Belongs to the glycogen phosphorylase family. Homodimer; enzymatically active. Interacts with PPP1R3B; recruits the phosphatase PP1 which dephosphorylates and inactivates PYGL/glycogen phosphorylase. Requires pyridoxal 5'-phosphate as cofactor. Acetylation, which is up-regulated by glucose and insulin and down-regulated by glucagon, inhibits the glycogen phosphorylase activity by promoting PPP1R3B-mediated recruitment of phosphatase PP1 and Ser-15 dephosphorylation. Post-translationally, phosphorylation at Ser-15 converts inactive phosphorylase b into active phosphorylase a. Dephosphorylation of Ser-15 by phosphatase PP1 inactivates the enzyme.

It localises to the cytoplasm. It is found in the cytosol. It catalyses the reaction [(1-&gt;4)-alpha-D-glucosyl](n) + phosphate = [(1-&gt;4)-alpha-D-glucosyl](n-1) + alpha-D-glucose 1-phosphate. Its activity is regulated as follows. Allosterically regulated through the non-covalent binding of metabolites, being activated by AMP and inhibited by ATP, ADP, and glucose-6-phosphate. The activity is also controlled by post-translational modifications including phosphorylation and acetylation. Functionally, allosteric enzyme that catalyzes the rate-limiting step in glycogen catabolism, the phosphorolytic cleavage of glycogen to produce glucose-1-phosphate, and plays a central role in maintaining cellular and organismal glucose homeostasis. This Bos taurus (Bovine) protein is Glycogen phosphorylase, liver form.